Consider the following 472-residue polypeptide: Coronin-6 (472 aa).

WD repeat units lie at residues 79–119 (GHTG…PVRN), 129–169 (GHSK…VLLS), 173–212 (IHPD…VVAE), 216–259 (AHEG…EPVA), and 264–304 (DTSN…PFVH). The tract at residues 409-434 (NILDVRPPASPRRSQSASEAPLSQQH) is disordered. Over residues 419 to 429 (PRRSQSASEAP) the composition is skewed to low complexity. A coiled-coil region spans residues 430–469 (LSQQHTLETLLEEMKALRERVQAQEERITALENMLCELVD).

The chain is Coronin-6 (Coro6) from Rattus norvegicus (Rat).